The sequence spans 260 residues: Dehydrin ERD10 (260 aa).

3 disordered regions span residues M1–K187, K197–L216, and K240–D260. The residue at position 2 (A2) is an N-acetylalanine. Over residues E26–P44 the composition is skewed to basic and acidic residues. Position 61 is a phosphoserine (S61). 5 stretches are compositionally biased toward basic and acidic residues: residues V67 to H102, I130 to E140, D148 to G162, S176 to K187, and K197 to D207. 2 repeat units span residues E184–K204 and P227–K247. The 2 X 21 AA repeats, Lys-rich stretch occupies residues E184–K247.

Belongs to the plant dehydrin family. As to expression, in stems, cauline leaves, roots and flowers. Low levels found in maturing seeds. Absent in dry seeds.

In Arabidopsis thaliana (Mouse-ear cress), this protein is Dehydrin ERD10 (ERD10).